The chain runs to 188 residues: Probable nicotinate-nucleotide adenylyltransferase (188 aa).

This sequence belongs to the NadD family.

It carries out the reaction nicotinate beta-D-ribonucleotide + ATP + H(+) = deamido-NAD(+) + diphosphate. It functions in the pathway cofactor biosynthesis; NAD(+) biosynthesis; deamido-NAD(+) from nicotinate D-ribonucleotide: step 1/1. Catalyzes the reversible adenylation of nicotinate mononucleotide (NaMN) to nicotinic acid adenine dinucleotide (NaAD). In Listeria monocytogenes serotype 4a (strain HCC23), this protein is Probable nicotinate-nucleotide adenylyltransferase.